A 377-amino-acid polypeptide reads, in one-letter code: Geranylgeranyl transferase type-1 subunit beta (377 aa).

PFTB repeat units lie at residues 144-186, 193-234, 245-284, and 291-333; these read KEAC…YMLN, MKKA…CLMG, LNRI…KLLK, and FEKN…SLME. Geranylgeranyl diphosphate is bound by residues 219–221 and 263–266; these read HGG and RPNK. D269 and C271 together coordinate Zn(2+). Position 272-275 (272-275) interacts with geranylgeranyl diphosphate; it reads YSFW. Zn(2+) is bound at residue H321.

This sequence belongs to the protein prenyltransferase subunit beta family. In terms of assembly, heterodimer of FNTA and PGGT1B. PGGT1B mediates interaction with substrate peptides. Zn(2+) serves as cofactor. Requires Mg(2+) as cofactor.

It carries out the reaction geranylgeranyl diphosphate + L-cysteinyl-[protein] = S-geranylgeranyl-L-cysteinyl-[protein] + diphosphate. In terms of biological role, catalyzes the transfer of a geranylgeranyl moiety from geranylgeranyl diphosphate to a cysteine at the fourth position from the C-terminus of proteins with the C-terminal sequence Cys-aliphatic-aliphatic-X. Known substrates include RAC1, RAC2, RAP1A and RAP1B. The sequence is that of Geranylgeranyl transferase type-1 subunit beta (Pggt1b) from Rattus norvegicus (Rat).